Reading from the N-terminus, the 185-residue chain is uncharacterized protein (185 aa).

The protein belongs to the PIGL family.

This is an uncharacterized protein from Escherichia coli (strain K12).